The following is a 460-amino-acid chain: GTPase Der (460 aa).

EngA-type G domains are found at residues 2–164 (QSII…HEEF) and 196–368 (IRVG…ENFT). Residues 8–15 (GKPNVGKS), 55–59 (DSGGL), 116–119 (NKVD), 202–209 (GRVNVGKS), 249–253 (DTAGI), and 313–316 (NKWD) contribute to the GTP site. The region spanning 369 to 453 (QKIQTSKLNT…PLVIASRKKG (85 aa)) is the KH-like domain.

It belongs to the TRAFAC class TrmE-Era-EngA-EngB-Septin-like GTPase superfamily. EngA (Der) GTPase family. In terms of assembly, associates with the 50S ribosomal subunit.

Functionally, GTPase that plays an essential role in the late steps of ribosome biogenesis. In Campylobacter jejuni subsp. jejuni serotype O:2 (strain ATCC 700819 / NCTC 11168), this protein is GTPase Der.